We begin with the raw amino-acid sequence, 111 residues long: X antigen family member 3 (111 aa).

A disordered region spans residues 1–111; it reads MIWRGRSTYR…PEGGDRQPQV (111 aa). Residues 29 to 40 are compositionally biased toward acidic residues; that stretch reads PGDEEPQQEEPP. Basic and acidic residues predominate over residues 97–111; that stretch reads EQFKMPEGGDRQPQV.

It belongs to the GAGE family.

The protein is X antigen family member 3 (XAGE3) of Homo sapiens (Human).